The following is a 199-amino-acid chain: MIAVIDVSGNNLTSLTNALIRLGGHFALTHDAEEIQKASHVILPGVGTARSGMTALQQNGLIDVLRTLTQPLLGICLGMQLLLEYSEEDDIPCLGLIPGVAELLKAERNHPVPHMGWNNLHWQKTSSLQQGLNNSDYVYFVHSYALKADNYALARCQYHEEFTAVVKKGNFYGMQFHPEKSANVGMVLLNNFLSLESTC.

The Glutamine amidotransferase type-1 domain occupies 1-199; that stretch reads MIAVIDVSGN…NNFLSLESTC (199 aa). The Nucleophile role is filled by cysteine 76. Catalysis depends on residues histidine 177 and glutamate 179.

In terms of assembly, heterodimer of HisH and HisF.

It localises to the cytoplasm. It carries out the reaction 5-[(5-phospho-1-deoxy-D-ribulos-1-ylimino)methylamino]-1-(5-phospho-beta-D-ribosyl)imidazole-4-carboxamide + L-glutamine = D-erythro-1-(imidazol-4-yl)glycerol 3-phosphate + 5-amino-1-(5-phospho-beta-D-ribosyl)imidazole-4-carboxamide + L-glutamate + H(+). It catalyses the reaction L-glutamine + H2O = L-glutamate + NH4(+). It participates in amino-acid biosynthesis; L-histidine biosynthesis; L-histidine from 5-phospho-alpha-D-ribose 1-diphosphate: step 5/9. Its function is as follows. IGPS catalyzes the conversion of PRFAR and glutamine to IGP, AICAR and glutamate. The HisH subunit provides the glutamine amidotransferase activity that produces the ammonia necessary to HisF for the synthesis of IGP and AICAR. This Legionella pneumophila subsp. pneumophila (strain Philadelphia 1 / ATCC 33152 / DSM 7513) protein is Imidazole glycerol phosphate synthase subunit HisH 2.